A 215-amino-acid polypeptide reads, in one-letter code: Superoxide dismutase [Mn] (215 aa).

Mn(2+)-binding residues include H27, H83, D170, and H174.

This sequence belongs to the iron/manganese superoxide dismutase family. In terms of assembly, homodimer. It depends on Mn(2+) as a cofactor.

The catalysed reaction is 2 superoxide + 2 H(+) = H2O2 + O2. Functionally, destroys superoxide anion radicals which are normally produced within the cells and which are toxic to biological systems. This chain is Superoxide dismutase [Mn] (sodA), found in Haemophilus influenzae (strain ATCC 51907 / DSM 11121 / KW20 / Rd).